The chain runs to 85 residues: Exodeoxyribonuclease 7 small subunit (85 aa).

This sequence belongs to the XseB family. Heterooligomer composed of large and small subunits.

Its subcellular location is the cytoplasm. It carries out the reaction Exonucleolytic cleavage in either 5'- to 3'- or 3'- to 5'-direction to yield nucleoside 5'-phosphates.. Functionally, bidirectionally degrades single-stranded DNA into large acid-insoluble oligonucleotides, which are then degraded further into small acid-soluble oligonucleotides. This is Exodeoxyribonuclease 7 small subunit from Mycobacterium bovis (strain ATCC BAA-935 / AF2122/97).